Consider the following 470-residue polypeptide: Cysteine--tRNA ligase (470 aa).

Cysteine 28 provides a ligand contact to Zn(2+). The short motif at 30-40 is the 'HIGH' region element; sequence PTVYNYIHIGN. Zn(2+) contacts are provided by cysteine 212, histidine 237, and glutamate 241. The 'KMSKS' region signature appears at 271-275; the sequence is KMSKS. Lysine 274 contacts ATP.

This sequence belongs to the class-I aminoacyl-tRNA synthetase family. In terms of assembly, monomer. It depends on Zn(2+) as a cofactor.

The protein resides in the cytoplasm. It carries out the reaction tRNA(Cys) + L-cysteine + ATP = L-cysteinyl-tRNA(Cys) + AMP + diphosphate. This is Cysteine--tRNA ligase from Pediococcus pentosaceus (strain ATCC 25745 / CCUG 21536 / LMG 10740 / 183-1w).